The primary structure comprises 79 residues: Exodeoxyribonuclease 7 small subunit (79 aa).

The protein belongs to the XseB family. Heterooligomer composed of large and small subunits.

It is found in the cytoplasm. The enzyme catalyses Exonucleolytic cleavage in either 5'- to 3'- or 3'- to 5'-direction to yield nucleoside 5'-phosphates.. Bidirectionally degrades single-stranded DNA into large acid-insoluble oligonucleotides, which are then degraded further into small acid-soluble oligonucleotides. The chain is Exodeoxyribonuclease 7 small subunit from Lactococcus lactis subsp. cremoris (strain SK11).